The following is a 447-amino-acid chain: Tubulin beta chain (447 aa).

Positions 11, 69, 138, 142, 143, 144, 204, and 226 each coordinate GTP. A Mg(2+)-binding site is contributed by Glu69. A disordered region spans residues 424–447 (QYQEASVSEGEEEYDEEAPLEGEE). The span at 432 to 447 (EGEEEYDEEAPLEGEE) shows a compositional bias: acidic residues.

It belongs to the tubulin family. In terms of assembly, dimer of alpha and beta chains. A typical microtubule is a hollow water-filled tube with an outer diameter of 25 nm and an inner diameter of 15 nM. Alpha-beta heterodimers associate head-to-tail to form protofilaments running lengthwise along the microtubule wall with the beta-tubulin subunit facing the microtubule plus end conferring a structural polarity. Microtubules usually have 13 protofilaments but different protofilament numbers can be found in some organisms and specialized cells. Requires Mg(2+) as cofactor.

It is found in the cytoplasm. Its subcellular location is the cytoskeleton. In terms of biological role, tubulin is the major constituent of microtubules, a cylinder consisting of laterally associated linear protofilaments composed of alpha- and beta-tubulin heterodimers. Microtubules grow by the addition of GTP-tubulin dimers to the microtubule end, where a stabilizing cap forms. Below the cap, tubulin dimers are in GDP-bound state, owing to GTPase activity of alpha-tubulin. This chain is Tubulin beta chain (TUB1), found in Cercospora beticola (Sugarbeet leaf spot fungus).